A 230-amino-acid chain; its full sequence is Large ribosomal subunit protein uL1 (230 aa).

The protein belongs to the universal ribosomal protein uL1 family. As to quaternary structure, part of the 50S ribosomal subunit.

In terms of biological role, binds directly to 23S rRNA. The L1 stalk is quite mobile in the ribosome, and is involved in E site tRNA release. Protein L1 is also a translational repressor protein, it controls the translation of the L11 operon by binding to its mRNA. This is Large ribosomal subunit protein uL1 from Onion yellows phytoplasma (strain OY-M).